The primary structure comprises 98 residues: Small ribosomal subunit protein bS6 (98 aa).

The protein belongs to the bacterial ribosomal protein bS6 family.

Its function is as follows. Binds together with bS18 to 16S ribosomal RNA. This is Small ribosomal subunit protein bS6 from Moorella thermoacetica (strain ATCC 39073 / JCM 9320).